Consider the following 346-residue polypeptide: Selenocysteine Se-methyltransferase (346 aa).

The Hcy-binding domain maps to 13–330 (SMKELLKETG…TTIRAIHKRL (318 aa)). Zn(2+)-binding residues include Cys248, Cys315, and Cys316.

The cofactor is Zn(2+). As to expression, expressed in roots, young leaves and florets, but not detected in plants not exposed to selenium.

The enzyme catalyses S-methyl-L-methionine + L-selenocysteine = Se-methyl-L-selenocysteine + L-methionine + H(+). Inhibited by L-methionine. Functionally, catalyzes the methylation of DL- and L-selenocysteine with S-methylmethionine as donor. Also methylates DL-homocysteine, DL- and L-cysteine in vitro. May be involved in selenium detoxification. The sequence is that of Selenocysteine Se-methyltransferase (SMT) from Brassica oleracea var. italica (Broccoli).